The primary structure comprises 673 residues: Clotting factor G alpha subunit (673 aa).

The first 19 residues, 1–19, serve as a signal peptide directing secretion; that stretch reads MLVLLCCVVLHVGVARICC. Positions 27 to 257 constitute a GH16 domain; sequence LVWSDEFTNG…YVRVYQDAST (231 aa). Glu-137 serves as the catalytic Nucleophile. Glu-142 serves as the catalytic Proton donor. N-linked (GlcNAc...) asparagine glycosylation occurs at Asn-186. Residues 266-404 enclose the Ricin B-type lectin domain; it reads LDGYYFVQNR…NQLSGQWKLI (139 aa). 2 consecutive CBM6 domains span residues 411-533 and 549-671; these read KLIQ…IKIT and KLIQ…IRIT.

The protein belongs to the glycosyl hydrolase 16 family. Clotting factor G is a heterodimer composed of two non-covalently associated subunits, alpha and beta. In terms of processing, in presence of (1-&gt;3)-beta-glucan, proteolytically cleaved into a 55kDa and a 17kDa forms. In terms of tissue distribution, expressed in hemocytes (at protein level).

In terms of biological role, component of the heterodimer clotting factor G which may play a role in defense mechanisms against fungi. Initiates a (1-&gt;3)-beta-glucan-sensing clotting pathway whereby the alpha subunit binds to glucans containing (1-&gt;3)-beta linkages, which are components of the fungal cell wall, and the beta subunit catalyzes the activation of proclotting enzyme. The chain is Clotting factor G alpha subunit from Tachypleus tridentatus (Japanese horseshoe crab).